The sequence spans 565 residues: Dihydroxy-acid dehydratase (565 aa).

Cys-53 is a [2Fe-2S] cluster binding site. Residue Asp-85 participates in Mg(2+) binding. Cys-126 is a binding site for [2Fe-2S] cluster. Residues Asp-127 and Lys-128 each contribute to the Mg(2+) site. Residue Lys-128 is modified to N6-carboxylysine. Residue Cys-198 coordinates [2Fe-2S] cluster. Position 450 (Glu-450) interacts with Mg(2+). The active-site Proton acceptor is Ser-476.

Belongs to the IlvD/Edd family. In terms of assembly, homodimer. It depends on [2Fe-2S] cluster as a cofactor. Requires Mg(2+) as cofactor.

The enzyme catalyses (2R)-2,3-dihydroxy-3-methylbutanoate = 3-methyl-2-oxobutanoate + H2O. The catalysed reaction is (2R,3R)-2,3-dihydroxy-3-methylpentanoate = (S)-3-methyl-2-oxopentanoate + H2O. Its pathway is amino-acid biosynthesis; L-isoleucine biosynthesis; L-isoleucine from 2-oxobutanoate: step 3/4. The protein operates within amino-acid biosynthesis; L-valine biosynthesis; L-valine from pyruvate: step 3/4. In terms of biological role, functions in the biosynthesis of branched-chain amino acids. Catalyzes the dehydration of (2R,3R)-2,3-dihydroxy-3-methylpentanoate (2,3-dihydroxy-3-methylvalerate) into 2-oxo-3-methylpentanoate (2-oxo-3-methylvalerate) and of (2R)-2,3-dihydroxy-3-methylbutanoate (2,3-dihydroxyisovalerate) into 2-oxo-3-methylbutanoate (2-oxoisovalerate), the penultimate precursor to L-isoleucine and L-valine, respectively. The sequence is that of Dihydroxy-acid dehydratase from Synechococcus sp. (strain JA-2-3B'a(2-13)) (Cyanobacteria bacterium Yellowstone B-Prime).